Here is a 192-residue protein sequence, read N- to C-terminus: uncharacterized protein (192 aa).

The Nudix hydrolase domain occupies 29–160 (HRQAAVLIPI…PLDIYRRGDS (132 aa)). The Nudix box signature appears at 67 to 89 (GAVDDTDASVIAAALREAEEEVA). The Mg(2+) site is built by E83 and E87.

This sequence belongs to the Nudix hydrolase family. PCD1 subfamily. The cofactor is Mn(2+). Mg(2+) is required as a cofactor.

Its function is as follows. Probably mediates the hydrolysis of some nucleoside diphosphate derivatives. This is an uncharacterized protein from Escherichia coli (strain SE11).